The chain runs to 304 residues: Energy-coupling factor transporter ATP-binding protein EcfA2 (304 aa).

Residues 3 to 261 (IIVKNISYIY…EKFLVENKLK (259 aa)) form the ABC transporter domain. 40 to 47 (GSTGSGKT) contributes to the ATP binding site.

This sequence belongs to the ABC transporter superfamily. Energy-coupling factor EcfA family. As to quaternary structure, forms a stable energy-coupling factor (ECF) transporter complex composed of 2 membrane-embedded substrate-binding proteins (S component), 2 ATP-binding proteins (A component) and 2 transmembrane proteins (T component).

It is found in the cell membrane. ATP-binding (A) component of a common energy-coupling factor (ECF) ABC-transporter complex. Unlike classic ABC transporters this ECF transporter provides the energy necessary to transport a number of different substrates. The protein is Energy-coupling factor transporter ATP-binding protein EcfA2 of Mycoplasmopsis pulmonis (strain UAB CTIP) (Mycoplasma pulmonis).